A 365-amino-acid polypeptide reads, in one-letter code: Transcription factor MYB93 (365 aa).

2 HTH myb-type domains span residues 9 to 61 (ENGL…TNYL) and 62 to 116 (RPDI…KKKL). 2 DNA-binding regions (H-T-H motif) span residues 37–61 (WRALPKLADLNRCGKSCRLRWTNYL) and 89–112 (WSAIATHLQGRTDNEIKNFWNTHL).

As to quaternary structure, interacts with FBX5.

The protein localises to the nucleus. It localises to the cytoplasm. Transcription factor that acts as a negative regulator of lateral root (LR) development. Required for normal auxin responses during LR development. May be part of a negative feedback loop stimulated specifically in the endodermis upon LR initiation to ensure that LRs are formed only in the correct place. This Arabidopsis thaliana (Mouse-ear cress) protein is Transcription factor MYB93.